The sequence spans 276 residues: MAIKKYKPTSNGRRGMTVLDFSEITTDQPEKSLLAPLKKKAGRNNQGKITVRHQGGGHKRQYRIIDFKRDKDGIPGRVATIEYDPNRSANIALINYADGEKRYILAPKNLKVGMEIMSGPNADIKVGNALPLENIPVGTLVHNIELKPGRGGQLVRAAGTSAQVLGKEGKYVIIRLASGEVRMILGKCRATVGEVGNEQHELVNIGKAGRARWLGIRPTVRGSVMNPVDHPHGGGEGKAPIGRKSPMTPWGKPTLGYKTRKKKNKSDKFIIRRRKK.

The tract at residues 224 to 276 (VMNPVDHPHGGGEGKAPIGRKSPMTPWGKPTLGYKTRKKKNKSDKFIIRRRKK) is disordered. Residues 258 to 276 (KTRKKKNKSDKFIIRRRKK) are compositionally biased toward basic residues.

This sequence belongs to the universal ribosomal protein uL2 family. In terms of assembly, part of the 50S ribosomal subunit. Forms a bridge to the 30S subunit in the 70S ribosome.

Its function is as follows. One of the primary rRNA binding proteins. Required for association of the 30S and 50S subunits to form the 70S ribosome, for tRNA binding and peptide bond formation. It has been suggested to have peptidyltransferase activity; this is somewhat controversial. Makes several contacts with the 16S rRNA in the 70S ribosome. The chain is Large ribosomal subunit protein uL2 from Geobacillus thermodenitrificans (strain NG80-2).